The sequence spans 84 residues: Beta-defensin 119 (84 aa).

The N-terminal stretch at 1 to 21 (MKFLFLFLAILLATKIPVISG) is a signal peptide. 3 cysteine pairs are disulfide-bonded: C28/C55, C35/C49, and C39/C56.

The protein belongs to the beta-defensin family.

The protein localises to the secreted. Functionally, has antibacterial activity. The polypeptide is Beta-defensin 119 (DEFB119) (Macaca fascicularis (Crab-eating macaque)).